The primary structure comprises 345 residues: Selenide, water dikinase (345 aa).

Cysteine 15 is an active-site residue. ATP contacts are provided by residues lysine 18 and serine 46–aspartate 48. Mg(2+) is bound at residue aspartate 49. ATP contacts are provided by residues aspartate 66, aspartate 89, and glycine 137–serine 139. Residue aspartate 89 coordinates Mg(2+). Aspartate 225 is a Mg(2+) binding site.

It belongs to the selenophosphate synthase 1 family. Class I subfamily. In terms of assembly, homodimer. It depends on Mg(2+) as a cofactor.

The catalysed reaction is hydrogenselenide + ATP + H2O = selenophosphate + AMP + phosphate + 2 H(+). Synthesizes selenophosphate from selenide and ATP. This Aeromonas hydrophila subsp. hydrophila (strain ATCC 7966 / DSM 30187 / BCRC 13018 / CCUG 14551 / JCM 1027 / KCTC 2358 / NCIMB 9240 / NCTC 8049) protein is Selenide, water dikinase.